We begin with the raw amino-acid sequence, 404 residues long: Cysteine desulfurase IscS (404 aa).

Pyridoxal 5'-phosphate-binding positions include A75 to T76, N155, Q183, and S203 to H205. At K206 the chain carries N6-(pyridoxal phosphate)lysine. T243 is a binding site for pyridoxal 5'-phosphate. C328 acts as the Cysteine persulfide intermediate in catalysis. C328 lines the [2Fe-2S] cluster pocket.

The protein belongs to the class-V pyridoxal-phosphate-dependent aminotransferase family. NifS/IscS subfamily. Homodimer. Forms a heterotetramer with IscU, interacts with other sulfur acceptors. It depends on pyridoxal 5'-phosphate as a cofactor.

The protein resides in the cytoplasm. It carries out the reaction (sulfur carrier)-H + L-cysteine = (sulfur carrier)-SH + L-alanine. The protein operates within cofactor biosynthesis; iron-sulfur cluster biosynthesis. Master enzyme that delivers sulfur to a number of partners involved in Fe-S cluster assembly, tRNA modification or cofactor biosynthesis. Catalyzes the removal of elemental sulfur atoms from cysteine to produce alanine. Functions as a sulfur delivery protein for Fe-S cluster synthesis onto IscU, an Fe-S scaffold assembly protein, as well as other S acceptor proteins. This is Cysteine desulfurase IscS from Vibrio campbellii (strain ATCC BAA-1116).